We begin with the raw amino-acid sequence, 215 residues long: LysM and putative peptidoglycan-binding domain-containing protein 1 (215 aa).

In terms of domain architecture, LysM spans 37 to 81; the sequence is LEHQVQPGDTLQGLALRYGVSMEQIKRANRLYTNDSIFLKKSLYI. 2 stretches are compositionally biased toward polar residues: residues 86–103 and 173–189; these read GQSD…SETE and GNRT…QQRS. Disordered stretches follow at residues 86–133 and 148–203; these read GQSD…PVDF and AVKK…TRAS.

The protein is LysM and putative peptidoglycan-binding domain-containing protein 1 (lysmd1) of Xenopus laevis (African clawed frog).